We begin with the raw amino-acid sequence, 933 residues long: 2-oxoglutarate dehydrogenase E1 component (933 aa).

Belongs to the alpha-ketoglutarate dehydrogenase family. Homodimer. Part of the 2-oxoglutarate dehydrogenase (OGDH) complex composed of E1 (2-oxoglutarate dehydrogenase), E2 (dihydrolipoamide succinyltransferase) and E3 (dihydrolipoamide dehydrogenase); the complex contains multiple copies of the three enzymatic components (E1, E2 and E3). The cofactor is thiamine diphosphate.

The enzyme catalyses N(6)-[(R)-lipoyl]-L-lysyl-[protein] + 2-oxoglutarate + H(+) = N(6)-[(R)-S(8)-succinyldihydrolipoyl]-L-lysyl-[protein] + CO2. Functionally, E1 component of the 2-oxoglutarate dehydrogenase (OGDH) complex which catalyzes the decarboxylation of 2-oxoglutarate, the first step in the conversion of 2-oxoglutarate to succinyl-CoA and CO(2). The protein is 2-oxoglutarate dehydrogenase E1 component (sucA) of Rickettsia typhi (strain ATCC VR-144 / Wilmington).